Here is a 216-residue protein sequence, read N- to C-terminus: MSLGLVGRKVGMTRIFTAEGDSIPVTVVDVSDNRVTQIKTVETDGYTAVQVAFGSRRASRVTKPLAGHLAKAGVEAGEILKEFRIDAAKAAELSNGAIVGPDLFEVGQKVDVQGVSIGKGYAGTIKRYNFGSGRASHGNSRSHNVPGSIGMAQDPGRVFPGKRMTGHMGDVTVTVQNLEIARIDAERKLLLVKGAIPGAKGGKVFVTPAVKTKGAK.

Glutamine 153 is modified (N5-methylglutamine).

This sequence belongs to the universal ribosomal protein uL3 family. In terms of assembly, part of the 50S ribosomal subunit. Forms a cluster with proteins L14 and L19. Methylated by PrmB.

In terms of biological role, one of the primary rRNA binding proteins, it binds directly near the 3'-end of the 23S rRNA, where it nucleates assembly of the 50S subunit. The chain is Large ribosomal subunit protein uL3 from Burkholderia multivorans (strain ATCC 17616 / 249).